A 524-amino-acid chain; its full sequence is MVPQALLFVPLLVFPLCFGKFPIYTILDKLGPWSPIDIHHLSCPNNLVVEDEGCTNLSGFSYMELKVGYILAIKMNGFTCTGVVTEAETYTNFVGYVTTTFKRKHFRPTPDACRAAYNWKMAGDPRYEESLHNPYPDYRWLRTVKTTKESLVIISPSVADLDPYDRSLHSRVFPSGKCSGVAVSSTYCSTNHDYTIWMPENPRLGMSCDIFTNSRGKRASKGSETCGFVDERGLYKSLKGACKLKLCGVLGLRLMDGTWVAMQTSNETKWCPPDQLVNLHDFRSDEIEHLVVEELVRKREECLDALESIMTTKSVSFRRLSHLRKLVPGFGKAYTIFNKTLMEADAHYKSVRTWNEILPSKGCLRVGGRCHPHVNGVFFNGIILGPDGNVLIPEMQSSLLQQHMELLESSVIPLVHPLADPSTVFKDGDEAEDFVEVHLPDVHNQVSGVDLGLPNWGKYVLLSAGALTALMLIIFLMTCCRRVNRSEPTQHNLRGTGREVSVTPQSGKIISSWESHKSGGETRL.

A signal peptide spans 1–19 (MVPQALLFVPLLVFPLCFG). The Virion surface portion of the chain corresponds to 20–459 (KFPIYTILDK…DLGLPNWGKY (440 aa)). Cystine bridges form between C43-C302, C54-C226, C80-C113, C178-C188, C208-C247, and C242-C271. N56 carries an N-linked (GlcNAc...) asparagine; by host glycan. N-linked (GlcNAc...) asparagine; by host glycosylation is found at N266 and N338. An intrachain disulfide couples C363 to C370. A helical transmembrane segment spans residues 460 to 480 (VLLSAGALTALMLIIFLMTCC). C480 carries S-palmitoyl cysteine; by host lipidation. Residues 481–524 (RRVNRSEPTQHNLRGTGREVSVTPQSGKIISSWESHKSGGETRL) lie on the Intravirion side of the membrane.

It belongs to the lyssavirus glycoprotein family. As to quaternary structure, homotrimer. Interacts with matrix protein. Interacts with host TRFC. Interacts with host BST2; this interaction inhibits viral budding by tethering new virions to the cell surface. Interacts with ITGB1. Interacts with host GRM2. Post-translationally, glycosylated and palmitoylated by host. Glycosylation is crucial for glycoprotein export at the cell surface.

It localises to the virion membrane. Its function is as follows. Attaches the virus to host cellular receptor, inducing endocytosis of the virion by using different host proteins including TFRC, GRM2 and ITGB1. In the endosome, the acidic pH induces conformational changes in the glycoprotein trimer, which trigger fusion between virus and cell membrane. There is convincing in vitro evidence that the muscular form of the nicotinic acetylcholine receptor (nAChR), the neuronal cell adhesion molecule (NCAM), and the p75 neurotrophin receptor (p75NTR) bind glycoprotein and thereby facilitate rabies virus entry into cells. The protein is Glycoprotein (G) of Rabies virus (strain ERA) (RABV).